The chain runs to 62 residues: Metallothionein-4 (62 aa).

A divalent metal cation-binding residues include cysteine 6, cysteine 8, cysteine 14, cysteine 16, cysteine 20, cysteine 22, cysteine 25, cysteine 27, cysteine 30, cysteine 34, cysteine 35, cysteine 37, cysteine 38, cysteine 42, cysteine 45, cysteine 49, cysteine 51, cysteine 58, cysteine 60, and cysteine 61.

It belongs to the metallothionein superfamily. Type 1 family.

Its function is as follows. Seems to bind zinc and copper. Could play a special role in regulating zinc metabolism during the differentiation of stratified epithelia. The polypeptide is Metallothionein-4 (MT4) (Canis lupus familiaris (Dog)).